The sequence spans 336 residues: Ketol-acid reductoisomerase (NADP(+)) (336 aa).

One can recognise a KARI N-terminal Rossmann domain in the interval 2–182 (AKIYYQQDCN…GGARAGVLET (181 aa)). Residues 25 to 28 (YGSQ), serine 51, serine 53, and 83 to 86 (DEKQ) each bind NADP(+). Histidine 108 is a catalytic residue. Residue glycine 134 coordinates NADP(+). In terms of domain architecture, KARI C-terminal knotted spans 183-328 (TFREETETDL…AELRGLMSWT (146 aa)). Mg(2+) is bound by residues aspartate 191, glutamate 195, glutamate 227, and glutamate 231. Serine 252 is a substrate binding site.

The protein belongs to the ketol-acid reductoisomerase family. The cofactor is Mg(2+).

The catalysed reaction is (2R)-2,3-dihydroxy-3-methylbutanoate + NADP(+) = (2S)-2-acetolactate + NADPH + H(+). It catalyses the reaction (2R,3R)-2,3-dihydroxy-3-methylpentanoate + NADP(+) = (S)-2-ethyl-2-hydroxy-3-oxobutanoate + NADPH + H(+). It participates in amino-acid biosynthesis; L-isoleucine biosynthesis; L-isoleucine from 2-oxobutanoate: step 2/4. It functions in the pathway amino-acid biosynthesis; L-valine biosynthesis; L-valine from pyruvate: step 2/4. Its function is as follows. Involved in the biosynthesis of branched-chain amino acids (BCAA). Catalyzes an alkyl-migration followed by a ketol-acid reduction of (S)-2-acetolactate (S2AL) to yield (R)-2,3-dihydroxy-isovalerate. In the isomerase reaction, S2AL is rearranged via a Mg-dependent methyl migration to produce 3-hydroxy-3-methyl-2-ketobutyrate (HMKB). In the reductase reaction, this 2-ketoacid undergoes a metal-dependent reduction by NADPH to yield (R)-2,3-dihydroxy-isovalerate. In Lachnoclostridium phytofermentans (strain ATCC 700394 / DSM 18823 / ISDg) (Clostridium phytofermentans), this protein is Ketol-acid reductoisomerase (NADP(+)).